The chain runs to 162 residues: NADH-quinone oxidoreductase subunit I (162 aa).

4Fe-4S ferredoxin-type domains follow at residues 53–83 and 93–122; these read LRRY…IEAE and TRYD…EGPN. The [4Fe-4S] cluster site is built by Cys-63, Cys-66, Cys-69, Cys-73, Cys-102, Cys-105, Cys-108, and Cys-112.

This sequence belongs to the complex I 23 kDa subunit family. In terms of assembly, NDH-1 is composed of 14 different subunits. Subunits NuoA, H, J, K, L, M, N constitute the membrane sector of the complex. [4Fe-4S] cluster is required as a cofactor.

It is found in the cell inner membrane. It carries out the reaction a quinone + NADH + 5 H(+)(in) = a quinol + NAD(+) + 4 H(+)(out). NDH-1 shuttles electrons from NADH, via FMN and iron-sulfur (Fe-S) centers, to quinones in the respiratory chain. The immediate electron acceptor for the enzyme in this species is believed to be ubiquinone. Couples the redox reaction to proton translocation (for every two electrons transferred, four hydrogen ions are translocated across the cytoplasmic membrane), and thus conserves the redox energy in a proton gradient. The protein is NADH-quinone oxidoreductase subunit I of Rhodospirillum centenum (strain ATCC 51521 / SW).